The sequence spans 731 residues: Endopolyphosphatase (731 aa).

Over 1-4 (MSLS) the chain is Cytoplasmic. Residues 5–25 (RCILGLACLWHGVIASPLGAV) form a helical; Signal-anchor for type II membrane protein membrane-spanning segment. At 26 to 731 (PSNIPIATDL…VEKEDLKKFT (706 aa)) the chain is on the vacuolar side. Residue asparagine 106 is glycosylated (N-linked (GlcNAc...) asparagine). The segment at 375-403 (KLQPPPTDSKNSGQLKKGKKGRKGKKKKP) is disordered. Positions 390–402 (KKGKKGRKGKKKK) are enriched in basic residues. A glycan (N-linked (GlcNAc...) asparagine) is linked at asparagine 433. The segment at 456–522 (EQNDRQKHLD…PPGPAYSPQP (67 aa)) is disordered. Basic and acidic residues-rich tracts occupy residues 457–474 (QNDR…PSHM) and 492–501 (GGDSKPKKPD). Positions 505–519 (PHPPAKSSPPGPAYS) are enriched in pro residues. 2 N-linked (GlcNAc...) asparagine glycosylation sites follow: asparagine 534 and asparagine 540. Residues 626–706 (AKSIDVSYES…HKKKKGKKRQ (81 aa)) are disordered. Over residues 636–686 (AAEEEEEEEEEEEEDLFEEVEETDEEEEQEDDDLSDGEEVDDDSDEDELET) the composition is skewed to acidic residues. A compositionally biased stretch (basic residues) spans 691 to 706 (KHDKKKHKKKKGKKRQ).

This sequence belongs to the endopolyphosphatase PPN1 family. Requires a divalent metal cation as cofactor. In terms of processing, processing by proteases in the vacuole may be required for activation.

It is found in the vacuole membrane. The catalysed reaction is [phosphate](n+1) + n H2O = (n+1) phosphate + n H(+). Functionally, catalyzes the hydrolysis of inorganic polyphosphate (polyP) chains of many hundreds of phosphate residues into shorter lengths. The protein is Endopolyphosphatase (epp-1) of Neurospora crassa (strain ATCC 24698 / 74-OR23-1A / CBS 708.71 / DSM 1257 / FGSC 987).